Here is a 290-residue protein sequence, read N- to C-terminus: Acetyl-coenzyme A carboxylase carboxyl transferase subunit beta (290 aa).

Residues 28 to 290 (IMTKCPKCKK…TGGDIEWLQD (263 aa)) form the CoA carboxyltransferase N-terminal domain. Zn(2+) contacts are provided by cysteine 32, cysteine 35, cysteine 51, and cysteine 54. The segment at 32 to 54 (CPKCKKIMLTKELDKNMRVCMNC) adopts a C4-type zinc-finger fold.

This sequence belongs to the AccD/PCCB family. In terms of assembly, acetyl-CoA carboxylase is a heterohexamer composed of biotin carboxyl carrier protein (AccB), biotin carboxylase (AccC) and two subunits each of ACCase subunit alpha (AccA) and ACCase subunit beta (AccD). Requires Zn(2+) as cofactor.

The protein resides in the cytoplasm. It catalyses the reaction N(6)-carboxybiotinyl-L-lysyl-[protein] + acetyl-CoA = N(6)-biotinyl-L-lysyl-[protein] + malonyl-CoA. It participates in lipid metabolism; malonyl-CoA biosynthesis; malonyl-CoA from acetyl-CoA: step 1/1. Its activity is regulated as follows. Inhibited by pyrrolidine dione antibiotics moiramide B (CPD1) and CPD2. Functionally, component of the acetyl coenzyme A carboxylase (ACC) complex. Biotin carboxylase (BC) catalyzes the carboxylation of biotin on its carrier protein (BCCP) and then the CO(2) group is transferred by the transcarboxylase to acetyl-CoA to form malonyl-CoA. In Bacillus subtilis (strain 168), this protein is Acetyl-coenzyme A carboxylase carboxyl transferase subunit beta.